A 343-amino-acid chain; its full sequence is SUMO-activating enzyme subunit aos-1 (343 aa).

It belongs to the ubiquitin-activating E1 family. In terms of assembly, heterodimer of aos-1 and uba-2.

It participates in protein modification; protein sumoylation. In terms of biological role, the dimeric enzyme acts as an E1 ligase for smo-1. It mediates ATP-dependent activation of smo-1 and formation of a thioester with a conserved cysteine residue on uba-2. The sequence is that of SUMO-activating enzyme subunit aos-1 (aos-1) from Caenorhabditis elegans.